Reading from the N-terminus, the 66-residue chain is MSVITCGGCPGRLGLNQIKQLIGKNGAEVVHFATCMTAFKPKCRYAEKMKEEIEKMGAKVVMSSHF.

This sequence to M.jannaschii MJ0582.

This is an uncharacterized protein from Methanocaldococcus jannaschii (strain ATCC 43067 / DSM 2661 / JAL-1 / JCM 10045 / NBRC 100440) (Methanococcus jannaschii).